A 225-amino-acid polypeptide reads, in one-letter code: MNSIEFPLLDRITQNSVISTTSNDLSNWSRLSSLWPLLYGTSCCFIEFASLIGSRFDFDRYGLVPRSSPRQADLILTAGTVTMKMAPSLVRLYEQMPEPKYVIAMGACTITGGMFSTDSYSTVRGVDKLIPVDVYLPGCPPKPEAVIDAITKLRKKVSREIYEDRTGSQQETRCFTTNHKFRVGRSIHTGNYNQGLLYQSPSTSETPSETFFKYKSSVSPHELVN.

[4Fe-4S] cluster contacts are provided by cysteine 43, cysteine 44, cysteine 108, and cysteine 139.

This sequence belongs to the complex I 20 kDa subunit family. In terms of assembly, NDH is composed of at least 16 different subunits, 5 of which are encoded in the nucleus. [4Fe-4S] cluster is required as a cofactor.

It localises to the plastid. The protein localises to the chloroplast thylakoid membrane. The enzyme catalyses a plastoquinone + NADH + (n+1) H(+)(in) = a plastoquinol + NAD(+) + n H(+)(out). It catalyses the reaction a plastoquinone + NADPH + (n+1) H(+)(in) = a plastoquinol + NADP(+) + n H(+)(out). In terms of biological role, NDH shuttles electrons from NAD(P)H:plastoquinone, via FMN and iron-sulfur (Fe-S) centers, to quinones in the photosynthetic chain and possibly in a chloroplast respiratory chain. The immediate electron acceptor for the enzyme in this species is believed to be plastoquinone. Couples the redox reaction to proton translocation, and thus conserves the redox energy in a proton gradient. The polypeptide is NAD(P)H-quinone oxidoreductase subunit K, chloroplastic (Nandina domestica (Heavenly bamboo)).